A 354-amino-acid chain; its full sequence is Methylthioribose-1-phosphate isomerase (354 aa).

Substrate-binding positions include 45-47, R87, and Q204; that span reads RGA. D245 (proton donor) is an active-site residue. Residue 255–256 coordinates substrate; that stretch reads NK.

Belongs to the eIF-2B alpha/beta/delta subunits family. MtnA subfamily.

It catalyses the reaction 5-(methylsulfanyl)-alpha-D-ribose 1-phosphate = 5-(methylsulfanyl)-D-ribulose 1-phosphate. The protein operates within amino-acid biosynthesis; L-methionine biosynthesis via salvage pathway; L-methionine from S-methyl-5-thio-alpha-D-ribose 1-phosphate: step 1/6. Functionally, catalyzes the interconversion of methylthioribose-1-phosphate (MTR-1-P) into methylthioribulose-1-phosphate (MTRu-1-P). The polypeptide is Methylthioribose-1-phosphate isomerase (Chlorobaculum tepidum (strain ATCC 49652 / DSM 12025 / NBRC 103806 / TLS) (Chlorobium tepidum)).